A 393-amino-acid chain; its full sequence is Probable pectinesterase 8 (393 aa).

The N-terminal stretch at 1–19 (MKIISLSISIGIAIIAVLA) is a signal peptide. Asparagine 100, asparagine 113, asparagine 140, asparagine 156, and asparagine 163 each carry an N-linked (GlcNAc...) asparagine glycan. Threonine 165 contacts substrate. Asparagine 182 is a glycosylation site (N-linked (GlcNAc...) asparagine). Residue glutamine 200 participates in substrate binding. Aspartate 223 serves as the catalytic Proton donor. The active-site Nucleophile is aspartate 244. N-linked (GlcNAc...) asparagine glycosylation is present at asparagine 295. A substrate-binding site is contributed by arginine 308. Asparagine 350, asparagine 369, and asparagine 378 each carry an N-linked (GlcNAc...) asparagine glycan.

It belongs to the pectinesterase family. As to expression, expressed in siliques.

It is found in the secreted. The protein localises to the cell wall. The enzyme catalyses [(1-&gt;4)-alpha-D-galacturonosyl methyl ester](n) + n H2O = [(1-&gt;4)-alpha-D-galacturonosyl](n) + n methanol + n H(+). It participates in glycan metabolism; pectin degradation; 2-dehydro-3-deoxy-D-gluconate from pectin: step 1/5. Functionally, acts in the modification of cell walls via demethylesterification of cell wall pectin. This Arabidopsis thaliana (Mouse-ear cress) protein is Probable pectinesterase 8 (PME8).